A 521-amino-acid polypeptide reads, in one-letter code: MTEFVPLTWHDTLYLAPELILAAMFLILIVTDLILPGRTNRAIIGWLSLAGLLLSLAAVIWRMIDMNPSGVSAAEAAEAGKAISLLGASYRVDDYGNLLKIIFLIGTSLVVLLGLGSTQKDDAVTDKAEFYYLLLPAAAGAMIMASSGNLVTLYIGLELLSITTYVLVGLRKRSSLSAEAAFKYVVTGGIASAFVLFGMSYLYGVTGSVSLADFPTALPQAFTDYKALVYVGFFFLIAGFGIKIAAAPFHIWAADVYQGAPTPVSAFLAVIAKGAALAAVFRFLYSSAFFLTGGPGKQAGDDVFFALLVIAAAAMIAGTVSALRQKQVKRLLALSGVANAGYLLVPIAISVTIIHSNNFSEFVFYLVAYLLMNVGAFAVVTVIARAAGHEELKGFSGLYYRAPWTAAAMLIFILSFSGLPVTAGFFGKLFILLGAASVKAYWLVAIMVVSTVISYYFYFGIIRQMFMRSNGEEEDRIHVPAVTGTVIWICAAATVALGVLPGPLMKWIDAVFTIQADLFVR.

14 consecutive transmembrane segments (helical) span residues 15 to 35 (LAPE…DLIL), 43 to 63 (IIGW…IWRM), 98 to 118 (LLKI…LGST), 128 to 148 (AEFY…ASSG), 150 to 170 (LVTL…LVGL), 185 to 205 (VVTG…LYGV), 227 to 247 (ALVY…IAAA), 261 to 281 (PTPV…AAVF), 303 to 323 (VFFA…VSAL), 331 to 351 (LLAL…AISV), 363 to 383 (VFYL…VTVI), 406 to 426 (AAAM…AGFF), 442 to 462 (WLVA…FGII), and 485 to 505 (TVIW…GPLM).

It belongs to the complex I subunit 2 family. As to quaternary structure, NDH-1 is composed of 14 different subunits. Subunits NuoA, H, J, K, L, M, N constitute the membrane sector of the complex.

It is found in the cell membrane. It carries out the reaction a quinone + NADH + 5 H(+)(in) = a quinol + NAD(+) + 4 H(+)(out). In terms of biological role, NDH-1 shuttles electrons from NADH, via FMN and iron-sulfur (Fe-S) centers, to quinones in the respiratory chain. The immediate electron acceptor for the enzyme in this species is believed to be a menaquinone. Couples the redox reaction to proton translocation (for every two electrons transferred, four hydrogen ions are translocated across the cytoplasmic membrane), and thus conserves the redox energy in a proton gradient. In Paenibacillus sp. (strain JDR-2), this protein is NADH-quinone oxidoreductase subunit N.